Reading from the N-terminus, the 375-residue chain is Ornithine transcarbamylase, chloroplastic (375 aa).

The N-terminal 53 residues, 1–53, are a transit peptide targeting the chloroplast; the sequence is MAAAMASHVSTARSPALSFSSSSSSFFPGTTLRRFSAVSLPSPALPRLRVSCQ. Residue Ala54 is modified to N-acetylalanine. Carbamoyl phosphate contacts are provided by residues 123–126, Arg174, His201, and Gln204; that span reads SMRT. Asn232, Asp293, Ser297, and Met298 together coordinate L-ornithine. Cys333 functions as the Proton acceptor in the catalytic mechanism. Carbamoyl phosphate contacts are provided by residues 333–334 and Arg361; that span reads CL.

The protein belongs to the aspartate/ornithine carbamoyltransferase superfamily. OTCase family.

The protein localises to the plastid. The protein resides in the chloroplast. It catalyses the reaction carbamoyl phosphate + L-ornithine = L-citrulline + phosphate + H(+). This Arabidopsis thaliana (Mouse-ear cress) protein is Ornithine transcarbamylase, chloroplastic (OTC).